A 273-amino-acid polypeptide reads, in one-letter code: Shikimate dehydrogenase (NADP(+)) (273 aa).

Residues 14-16 (SKS) and Thr61 each bind shikimate. Residue Lys65 is the Proton acceptor of the active site. Asp77 contacts NADP(+). Positions 86 and 102 each coordinate shikimate. Residues 127–131 (GAGGA), 151–156 (NRTGAR), and Met215 contribute to the NADP(+) site. A shikimate-binding site is contributed by Tyr217. Position 239 (Gly239) interacts with NADP(+).

It belongs to the shikimate dehydrogenase family. In terms of assembly, homodimer.

It carries out the reaction shikimate + NADP(+) = 3-dehydroshikimate + NADPH + H(+). It functions in the pathway metabolic intermediate biosynthesis; chorismate biosynthesis; chorismate from D-erythrose 4-phosphate and phosphoenolpyruvate: step 4/7. In terms of biological role, involved in the biosynthesis of the chorismate, which leads to the biosynthesis of aromatic amino acids. Catalyzes the reversible NADPH linked reduction of 3-dehydroshikimate (DHSA) to yield shikimate (SA). The protein is Shikimate dehydrogenase (NADP(+)) of Thioalkalivibrio sulfidiphilus (strain HL-EbGR7).